The primary structure comprises 259 residues: Complement factor D (259 aa).

Residues 1 to 21 (MADRSLHLVVLILLGTALCAA) form the signal peptide. The propeptide at 22–26 (QPRGR) is activation peptide. Residues 27 to 254 (ILRGQEAPSH…YVAWIDGVMA (228 aa)) form the Peptidase S1 domain. Cys52 and Cys68 are joined by a disulfide. Catalysis depends on charge relay system residues His67 and Asp115. 3 cysteine pairs are disulfide-bonded: Cys149/Cys215, Cys180/Cys196, and Cys205/Cys230. Ser209 acts as the Charge relay system in catalysis. A self-inhibitor loop region spans residues 224–228 (TSGSR).

Belongs to the peptidase S1 family. CFD is activated by the removal of 5 residues at the N-terminus, named activation peptide, by the MASP-3 isoform of MASP1.

It is found in the secreted. The catalysed reaction is Selective cleavage of Arg-|-Lys bond in complement factor B when in complex with complement subcomponent C3b or with cobra venom factor.. With respect to regulation, circulates in plasma in a mature but self-inhibited form. Activated by factor B (CFB), which displaces the self-inhibition loop. Associates with CFB complexed with complement C3b. Its function is as follows. Serine protease that initiates the alternative pathway of the complement system, a cascade of proteins that leads to phagocytosis and breakdown of pathogens and signaling that strengthens the adaptive immune system. In contrast to other complement pathways (classical, lectin and GZMK) that are directly activated by pathogens or antigen-antibody complexes, the alternative complement pathway is initiated by the spontaneous hydrolysis of complement C3. The alternative complement pathway acts as an amplification loop that enhances complement activation by mediating the formation of C3 and C5 convertases. Activated CFD cleaves factor B (CFB) when the latter is complexed with complement C3b, activating the C3 convertase of the alternative pathway. This is Complement factor D (CFD) from Bos taurus (Bovine).